The primary structure comprises 298 residues: UDP-N-acetylenolpyruvoylglucosamine reductase (298 aa).

In terms of domain architecture, FAD-binding PCMH-type spans 26–190 (RAGGPAERLY…VAAVLDLEPG (165 aa)). Residue arginine 170 is part of the active site. The active-site Proton donor is the serine 219. Residue glutamate 289 is part of the active site.

It belongs to the MurB family. Requires FAD as cofactor.

It is found in the cytoplasm. The catalysed reaction is UDP-N-acetyl-alpha-D-muramate + NADP(+) = UDP-N-acetyl-3-O-(1-carboxyvinyl)-alpha-D-glucosamine + NADPH + H(+). It participates in cell wall biogenesis; peptidoglycan biosynthesis. In terms of biological role, cell wall formation. The polypeptide is UDP-N-acetylenolpyruvoylglucosamine reductase (Alkalilimnicola ehrlichii (strain ATCC BAA-1101 / DSM 17681 / MLHE-1)).